The primary structure comprises 253 residues: 3-deoxy-manno-octulosonate cytidylyltransferase (253 aa).

Belongs to the KdsB family.

It localises to the cytoplasm. The enzyme catalyses 3-deoxy-alpha-D-manno-oct-2-ulosonate + CTP = CMP-3-deoxy-beta-D-manno-octulosonate + diphosphate. The protein operates within nucleotide-sugar biosynthesis; CMP-3-deoxy-D-manno-octulosonate biosynthesis; CMP-3-deoxy-D-manno-octulosonate from 3-deoxy-D-manno-octulosonate and CTP: step 1/1. It functions in the pathway bacterial outer membrane biogenesis; lipopolysaccharide biosynthesis. In terms of biological role, activates KDO (a required 8-carbon sugar) for incorporation into bacterial lipopolysaccharide in Gram-negative bacteria. In Edwardsiella ictaluri (strain 93-146), this protein is 3-deoxy-manno-octulosonate cytidylyltransferase.